The sequence spans 447 residues: Protein king tubby (447 aa).

The tract at residues 54–84 (GSPQNPDQILSNNSSSITMNSSRNNSNNMRS) is disordered. Over residues 62 to 84 (ILSNNSSSITMNSSRNNSNNMRS) the composition is skewed to low complexity. The residue at position 136 (Ser-136) is a Phosphoserine. Over residues 168–182 (EGAAMEGSNGAANGS) the composition is skewed to low complexity. Positions 168–191 (EGAAMEGSNGAANGSGSVGGSGES) are disordered.

It belongs to the TUB family.

It is found in the cytoplasm. It localises to the nucleus. The protein localises to the cell projection. The protein resides in the cilium membrane. Its subcellular location is the rhabdomere. This chain is Protein king tubby, found in Drosophila grimshawi (Hawaiian fruit fly).